Here is a 382-residue protein sequence, read N- to C-terminus: Nitric oxide reductase FlRd-NAD(+) reductase (382 aa).

It belongs to the FAD-dependent oxidoreductase family. Requires FAD as cofactor.

The protein resides in the cytoplasm. It carries out the reaction 2 reduced [nitric oxide reductase rubredoxin domain] + NAD(+) + H(+) = 2 oxidized [nitric oxide reductase rubredoxin domain] + NADH. Its pathway is nitrogen metabolism; nitric oxide reduction. One of at least two accessory proteins for anaerobic nitric oxide (NO) reductase. Reduces the rubredoxin moiety of NO reductase. This Vibrio vulnificus (strain CMCP6) protein is Nitric oxide reductase FlRd-NAD(+) reductase.